Here is a 216-residue protein sequence, read N- to C-terminus: Uracil phosphoribosyltransferase (216 aa).

5-phospho-alpha-D-ribose 1-diphosphate is bound by residues arginine 85, arginine 110, and 135 to 143; that span reads DPMVATGYS. Residues isoleucine 200 and 205-207 each bind uracil; that span reads GDA. Residue aspartate 206 coordinates 5-phospho-alpha-D-ribose 1-diphosphate.

The protein belongs to the UPRTase family. Mg(2+) serves as cofactor.

It catalyses the reaction UMP + diphosphate = 5-phospho-alpha-D-ribose 1-diphosphate + uracil. Its pathway is pyrimidine metabolism; UMP biosynthesis via salvage pathway; UMP from uracil: step 1/1. Allosterically activated by GTP. Catalyzes the conversion of uracil and 5-phospho-alpha-D-ribose 1-diphosphate (PRPP) to UMP and diphosphate. This is Uracil phosphoribosyltransferase from Ralstonia pickettii (strain 12J).